The chain runs to 480 residues: Endoplasmic reticulum lectin 1 (480 aa).

Positions M1–G27 are cleaved as a signal peptide. MRH domains follow at residues S108–H245 and S339–I466. C110 and C123 are oxidised to a cystine. The disordered stretch occupies residues V152–H172. Residues Q163 to H172 show a composition bias toward basic and acidic residues. Intrachain disulfides connect C198-C231, C214-C243, C341-C354, C418-C452, and C433-C464.

The protein localises to the endoplasmic reticulum lumen. Functionally, probable lectin that binds selectively to improperly folded lumenal proteins. May function in endoplasmic reticulum quality control and endoplasmic reticulum-associated degradation (ERAD) of both non-glycosylated proteins and glycoproteins. The polypeptide is Endoplasmic reticulum lectin 1 (erlec1) (Xenopus laevis (African clawed frog)).